Here is a 217-residue protein sequence, read N- to C-terminus: Probable chemoreceptor glutamine deamidase CheD (217 aa).

The interval 194-217 (ATSGTAPSRGGELFTRASASRTPS) is disordered.

It belongs to the CheD family.

The catalysed reaction is L-glutaminyl-[protein] + H2O = L-glutamyl-[protein] + NH4(+). In terms of biological role, probably deamidates glutamine residues to glutamate on methyl-accepting chemotaxis receptors (MCPs), playing an important role in chemotaxis. The polypeptide is Probable chemoreceptor glutamine deamidase CheD (Cupriavidus pinatubonensis (strain JMP 134 / LMG 1197) (Cupriavidus necator (strain JMP 134))).